Reading from the N-terminus, the 189-residue chain is MTMISVNEFKNGLTIQYNNDLWRIVEFQHVKPGKGSAFVRSKLKSLRTGAVQEYTFRSTAKVETADIQTKSMQYLYNDGSSYVFMDTSTYDQLAIPNEQIGDEANYLLENMVVSVITHEGETLGIQLPNTVDLKVAKTEPNIKGDTSSGGGKPATMETGLVVNVPFFINEGDVLTINTSDGTYVSRANK.

This sequence belongs to the elongation factor P family.

It is found in the cytoplasm. Its pathway is protein biosynthesis; polypeptide chain elongation. Functionally, involved in peptide bond synthesis. Stimulates efficient translation and peptide-bond synthesis on native or reconstituted 70S ribosomes in vitro. Probably functions indirectly by altering the affinity of the ribosome for aminoacyl-tRNA, thus increasing their reactivity as acceptors for peptidyl transferase. The sequence is that of Elongation factor P 2 from Lactobacillus acidophilus (strain ATCC 700396 / NCK56 / N2 / NCFM).